The following is a 1022-amino-acid chain: Sodium/potassium-transporting ATPase subunit alpha (1022 aa).

A propeptide spanning residues 1–5 (MGKGA) is cleaved from the precursor. The interval 1–34 (MGKGAASEKYQPAATSENAKNSKKSKSKTTDLDE) is disordered. Over 6–87 (ASEKYQPAAT…NALTPPPTTP (82 aa)) the chain is Cytoplasmic. Serine 16 bears the Phosphoserine; by PKC mark. Positions 82–84 (PPP) are interaction with phosphoinositide-3 kinase. The helical transmembrane segment at 88-108 (EWIKFCRQLFGGFSILLWTGA) threads the bilayer. Over 109–131 (ILCFLAYGIQVATVDNPANDNLY) the chain is Lumenal. The helical transmembrane segment at 132-152 (LGVVLSTVVIITGCFSYYQEA) threads the bilayer. Residues 153 to 288 (KSSKIMDSFK…VGQTPIAAEI (136 aa)) lie on the Cytoplasmic side of the membrane. The tract at residues 215 to 235 (NSSLTGESEPQSRSPEYSSEN) is disordered. Residues 289 to 308 (EHFIHIITGVAVFLGVSFFI) form a helical membrane-spanning segment. At 309-320 (LSLILGYTWLEA) the chain is on the lumenal side. The chain crosses the membrane as a helical span at residues 321 to 338 (VIFLIGIIVANVPEGLLA). The Cytoplasmic segment spans residues 339–771 (TVTVCLTLTA…EEGRLIFDNL (433 aa)). Residue aspartate 376 is the 4-aspartylphosphate intermediate of the active site. Mg(2+) is bound by residues aspartate 716 and aspartate 720. Residues 772 to 791 (KKSIAYTLTSNIPEITPFLV) form a helical membrane-spanning segment. Over 792 to 801 (FIIANVPLPL) the chain is Lumenal. Residues 802 to 822 (GTVTILCIDLGTDMVPAISLA) traverse the membrane as a helical segment. At 823 to 842 (YERAESDIMKRQPRNPKTDK) the chain is on the cytoplasmic side. A helical membrane pass occupies residues 843–865 (LVNERLISMAYGQIGMIQALGGF). Topologically, residues 866 to 917 (FSYFVILAENGFLPIDLIGIREKWDELWTQDLEDSYGQQWTYEQRKIVEYTC) are lumenal. Residues 918–937 (HTSFFVSIVIVQWADLIICK) form a helical membrane-spanning segment. The Cytoplasmic segment spans residues 938–950 (TRRNSIFQQGMKN). Phosphoserine; by PKA is present on serine 942. A helical transmembrane segment spans residues 951 to 969 (KILIFGLFEETALAAFLSY). The Lumenal portion of the chain corresponds to 970-984 (TPGTDIALRMYPLKP). A helical transmembrane segment spans residues 985–1005 (SWWFCAFPYSLIIFLYDEARR). The Cytoplasmic segment spans residues 1006–1022 (FILRRNPGGWVEQETYY).

This sequence belongs to the cation transport ATPase (P-type) (TC 3.A.3) family. Type IIC subfamily. In terms of assembly, the sodium/potassium-transporting ATPase is composed of a catalytic alpha subunit, an auxiliary non-catalytic beta subunit and an additional regulatory subunit.

It localises to the cell membrane. The catalysed reaction is K(+)(out) + Na(+)(in) + ATP + H2O = K(+)(in) + Na(+)(out) + ADP + phosphate + H(+). In terms of biological role, this is the catalytic component of the active enzyme, which catalyzes the hydrolysis of ATP coupled with the exchange of sodium and potassium ions across the plasma membrane. This action creates the electrochemical gradient of sodium and potassium ions, providing the energy for active transport of various nutrients. This Tetronarce californica (Pacific electric ray) protein is Sodium/potassium-transporting ATPase subunit alpha.